Here is a 157-residue protein sequence, read N- to C-terminus: uncharacterized protein (157 aa).

The N-acetyltransferase domain occupies 9–154; sequence LLINYKTLDE…ETNSNAITNE (146 aa).

This is an uncharacterized protein from Bacillus mycoides (strain KBAB4) (Bacillus weihenstephanensis).